A 368-amino-acid polypeptide reads, in one-letter code: Zinc finger protein 24 (368 aa).

Residue Lys22 forms a Glycyl lysine isopeptide (Lys-Gly) (interchain with G-Cter in SUMO2) linkage. Lys27 is covalently cross-linked (Glycyl lysine isopeptide (Lys-Gly) (interchain with G-Cter in SUMO1); alternate). Residue Lys27 forms a Glycyl lysine isopeptide (Lys-Gly) (interchain with G-Cter in SUMO2); alternate linkage. One can recognise an SCAN box domain in the interval 52–134 (RQRFRQFGYQ…TVLEDLESEL (83 aa)). Phosphoserine occurs at positions 132 and 142. Residues Lys147, Lys177, and Lys236 each participate in a glycyl lysine isopeptide (Lys-Gly) (interchain with G-Cter in SUMO2) cross-link. Residues 251-273 (HICDECGKHFSQGSALILHQRIH) form a C2H2-type 1 zinc finger. Residues 251–301 (HICDECGKHFSQGSALILHQRIHSGEKPYGCVECGKAFSRSSILVQHQRVH) form a necessary and sufficient for nuclear localization region. Ser274 bears the Phosphoserine mark. Glycyl lysine isopeptide (Lys-Gly) (interchain with G-Cter in SUMO2) cross-links involve residues Lys277 and Lys286. 3 C2H2-type zinc fingers span residues 279 to 301 (YGCV…QRVH), 307 to 329 (YKCL…QRIH), and 335 to 357 (YECV…QRRH). Ser292 is subject to Phosphoserine. Tyr335 bears the Phosphotyrosine mark. Glycyl lysine isopeptide (Lys-Gly) (interchain with G-Cter in SUMO2) cross-links involve residues Lys361 and Lys367.

It belongs to the krueppel C2H2-type zinc-finger protein family. Sumoylated. In terms of tissue distribution, expressed in many tissues except in heart.

The protein resides in the nucleus. Its function is as follows. Transcription factor required for myelination of differentiated oligodendrocytes. Required for the conversion of oligodendrocytes from the premyelinating to the myelinating state. In the developing central nervous system (CNS), involved in the maintenance in the progenitor stage by promoting the cell cycle. Specifically binds to the 5'-TCAT-3' DNA sequence. Has transcription repressor activity in vitro. The polypeptide is Zinc finger protein 24 (ZNF24) (Homo sapiens (Human)).